We begin with the raw amino-acid sequence, 385 residues long: Probable caffeine synthase 4 (385 aa).

Positions 18, 62, 67, 101, 102, 140, and 141 each coordinate S-adenosyl-L-homocysteine. Caffeine-binding residues include Y158, Q161, and F162. N179 provides a ligand contact to Mg(2+). A caffeine-binding site is contributed by T238. 3 residues coordinate Mg(2+): D261, F263, and N264. Y369 contacts caffeine.

It belongs to the methyltransferase superfamily. Type-7 methyltransferase family. The cofactor is Mg(2+). In terms of tissue distribution, expressed in roots, stems, young and old leaves.

The protein operates within alkaloid biosynthesis. May be involved in the biosynthesis of caffeine. This chain is Probable caffeine synthase 4, found in Coffea arabica (Arabian coffee).